A 638-amino-acid polypeptide reads, in one-letter code: 1-deoxy-D-xylulose-5-phosphate synthase (638 aa).

Thiamine diphosphate is bound by residues H77 and 118–120 (AHA). D149 provides a ligand contact to Mg(2+). Residues 150 to 151 (GS), N178, Y287, and E369 each bind thiamine diphosphate. N178 contributes to the Mg(2+) binding site.

Belongs to the transketolase family. DXPS subfamily. Homodimer. It depends on Mg(2+) as a cofactor. Thiamine diphosphate serves as cofactor.

It catalyses the reaction D-glyceraldehyde 3-phosphate + pyruvate + H(+) = 1-deoxy-D-xylulose 5-phosphate + CO2. The protein operates within metabolic intermediate biosynthesis; 1-deoxy-D-xylulose 5-phosphate biosynthesis; 1-deoxy-D-xylulose 5-phosphate from D-glyceraldehyde 3-phosphate and pyruvate: step 1/1. Catalyzes the acyloin condensation reaction between C atoms 2 and 3 of pyruvate and glyceraldehyde 3-phosphate to yield 1-deoxy-D-xylulose-5-phosphate (DXP). This chain is 1-deoxy-D-xylulose-5-phosphate synthase, found in Phenylobacterium zucineum (strain HLK1).